A 495-amino-acid chain; its full sequence is N-succinylglutamate 5-semialdehyde dehydrogenase (495 aa).

228–233 (GSYATG) provides a ligand contact to NAD(+). Active-site residues include glutamate 251 and cysteine 285.

The protein belongs to the aldehyde dehydrogenase family. AstD subfamily.

The catalysed reaction is N-succinyl-L-glutamate 5-semialdehyde + NAD(+) + H2O = N-succinyl-L-glutamate + NADH + 2 H(+). The protein operates within amino-acid degradation; L-arginine degradation via AST pathway; L-glutamate and succinate from L-arginine: step 4/5. In terms of biological role, catalyzes the NAD-dependent reduction of succinylglutamate semialdehyde into succinylglutamate. The chain is N-succinylglutamate 5-semialdehyde dehydrogenase from Legionella pneumophila (strain Paris).